A 518-amino-acid polypeptide reads, in one-letter code: Light-independent protochlorophyllide reductase subunit B (518 aa).

D36 lines the [4Fe-4S] cluster pocket. D299 acts as the Proton donor in catalysis. Position 434–435 (434–435) interacts with substrate; sequence GM.

This sequence belongs to the ChlB/BchB/BchZ family. In terms of assembly, protochlorophyllide reductase is composed of three subunits; ChlL, ChlN and ChlB. Forms a heterotetramer of two ChlB and two ChlN subunits. [4Fe-4S] cluster is required as a cofactor.

It localises to the plastid. The protein resides in the chloroplast. The catalysed reaction is chlorophyllide a + oxidized 2[4Fe-4S]-[ferredoxin] + 2 ADP + 2 phosphate = protochlorophyllide a + reduced 2[4Fe-4S]-[ferredoxin] + 2 ATP + 2 H2O. Its pathway is porphyrin-containing compound metabolism; chlorophyll biosynthesis (light-independent). Its function is as follows. Component of the dark-operative protochlorophyllide reductase (DPOR) that uses Mg-ATP and reduced ferredoxin to reduce ring D of protochlorophyllide (Pchlide) to form chlorophyllide a (Chlide). This reaction is light-independent. The NB-protein (ChlN-ChlB) is the catalytic component of the complex. The polypeptide is Light-independent protochlorophyllide reductase subunit B (Adiantum capillus-veneris (Maidenhair fern)).